Consider the following 63-residue polypeptide: Prokaryotic ubiquitin-like protein Pup (63 aa).

The tract at residues 1–35 is disordered; it reads MSGQQSQINAGGGNGQGGDTPEFDAGQVSINSAGT. Residues 19–57 are ARC ATPase binding; sequence DTPEFDAGQVSINSAGTDDLLDEIDGLLESNAEEFVRSY. E63 is covalently cross-linked (Isoglutamyl lysine isopeptide (Glu-Lys) (interchain with K-? in acceptor proteins)).

This sequence belongs to the prokaryotic ubiquitin-like protein family. Strongly interacts with the proteasome-associated ATPase ARC through a hydrophobic interface; the interacting region of Pup lies in its C-terminal half. There is one Pup binding site per ARC hexamer ring.

The protein operates within protein degradation; proteasomal Pup-dependent pathway. In terms of biological role, protein modifier that is covalently attached to lysine residues of substrate proteins, thereby targeting them for proteasomal degradation. The tagging system is termed pupylation. In Corynebacterium aurimucosum (strain ATCC 700975 / DSM 44827 / CIP 107346 / CN-1) (Corynebacterium nigricans), this protein is Prokaryotic ubiquitin-like protein Pup.